Here is a 237-residue protein sequence, read N- to C-terminus: Phosphoribosylaminoimidazole-succinocarboxamide synthase (237 aa).

Belongs to the SAICAR synthetase family.

The enzyme catalyses 5-amino-1-(5-phospho-D-ribosyl)imidazole-4-carboxylate + L-aspartate + ATP = (2S)-2-[5-amino-1-(5-phospho-beta-D-ribosyl)imidazole-4-carboxamido]succinate + ADP + phosphate + 2 H(+). Its pathway is purine metabolism; IMP biosynthesis via de novo pathway; 5-amino-1-(5-phospho-D-ribosyl)imidazole-4-carboxamide from 5-amino-1-(5-phospho-D-ribosyl)imidazole-4-carboxylate: step 1/2. This Listeria welshimeri serovar 6b (strain ATCC 35897 / DSM 20650 / CCUG 15529 / CIP 8149 / NCTC 11857 / SLCC 5334 / V8) protein is Phosphoribosylaminoimidazole-succinocarboxamide synthase.